The sequence spans 712 residues: Autophagy-related protein 13 (712 aa).

Disordered stretches follow at residues 388–443 (AGST…ETPP) and 568–611 (GSVG…DDDE). Residues 402 to 415 (SSVGSGSKYSSSFG) show a composition bias toward low complexity. Positions 412 to 420 (SSFGRIRRH) are ATG17-binding. Positions 424–439 (RRSESIDRTAKPRKSN) are enriched in basic and acidic residues. Residues 441–500 (TPPEDLLEFVKLLEDKKELNMKPSTILPQQDISSSLIKFQSMKPNNDTLSDNLSMSMSID) form an ATG1-binding region. Over residues 576-585 (TNEDSKEDED) the composition is skewed to acidic residues.

It belongs to the ATG13 family. Fungi subfamily. In terms of assembly, hypophosphorylated form interacts with ATG1 to form the ATG1-ATG13 kinase complex. The ATG1-ATG13 complex interacts with the ATG17-ATG29-ATG31 complex through direct interaction with ATG17. Interacts with VAC8. Hyperphosphorylated under nutrient-rich conditions. Starvation and TOR inactivation results in ATG13 partial dephosphorylation leading to ATG1-binding. Dephosphorylation induces ATG17-binding.

The protein resides in the cytoplasm. It is found in the preautophagosomal structure. Functionally, activates the ATG1 kinase in a nutritional condition dependent manner through the TOR pathway, leading to autophagy. Involved in ATG9 and ATG23 cycling through the pre-autophagosomal structure. Also involved in cytoplasm to vacuole transport (Cvt) and more specifically in Cvt vesicle formation. Seems to play a role in the switching machinery regulating the conversion between the Cvt pathway and autophagy. Finally, ATG13 is also required for glycogen storage during stationary phase. The polypeptide is Autophagy-related protein 13 (Kluyveromyces marxianus (strain DMKU3-1042 / BCC 29191 / NBRC 104275) (Yeast)).